We begin with the raw amino-acid sequence, 146 residues long: P antigen family member 1 (146 aa).

The disordered stretch occupies residues 16 to 146 (YVESSEESSD…PEEDEGQSQP (131 aa)). Positions 19–32 (SSEESSDEQPDEVE) are enriched in acidic residues. Position 63 is a phosphoserine (Ser-63). Basic and acidic residues predominate over residues 79–92 (PDTKRVCLRNEEQM). Ser-105 bears the Phosphoserine mark. The span at 107-120 (EQVHPKTGCERGDG) shows a compositional bias: basic and acidic residues. Ser-144 is modified (phosphoserine).

This sequence belongs to the GAGE family. As to expression, isolated from prostate cancer cell lines; expression associated with progression to androgen insensitive phenotype. Expressed in normal testis and at lower level in normal placenta.

The protein is P antigen family member 1 (PAGE1) of Homo sapiens (Human).